Reading from the N-terminus, the 474-residue chain is Semenogelin-2 (474 aa).

Residues 1–23 form the signal peptide; sequence MKSIILFVLSLLLILEKQAAVMG. 5 disordered regions span residues 24 to 62, 132 to 158, 173 to 194, 226 to 247, and 272 to 474; these read QKGG…SKGS, GGQA…LSSQ, KEQA…QSSY, VREE…DRLQ, and NLNQ…SSTE. 3 stretches are compositionally biased toward polar residues: residues 31–40, 137–158, and 174–194; these read QLPSGSSQFP, RGTQ…LSSQ, and EQAS…QSSY. A compositionally biased stretch (basic and acidic residues) spans 292 to 310; that stretch reads RTEERQLNHGEKSVQKDVS. Positions 325–334 are enriched in polar residues; that stretch reads KSQNQVTIHS. The segment covering 335–346 has biased composition (basic and acidic residues); the sequence is QDQEHGHKENKM. Residues 372-397 are compositionally biased toward polar residues; sequence GSISIQTEEQIHGKSQNQVRIPSQAQ. The span at 399–426 shows a compositional bias: basic and acidic residues; it reads YGHKENKISYRSSSTEERRLNSGEKDVQ. Over residues 445–455 the composition is skewed to polar residues; the sequence is KSQNQVTIPSQ. Positions 456–465 are enriched in basic and acidic residues; the sequence is DQEHGHKENK.

The protein belongs to the semenogelin family. In terms of assembly, interacts with SERPINA5.

Its subcellular location is the secreted. In terms of biological role, participates in the formation of a gel matrix (sperm coagulum) entrapping the accessory gland secretions and ejaculated spermatozoa. This Gorilla gorilla gorilla (Western lowland gorilla) protein is Semenogelin-2 (SEMG2).